A 398-amino-acid polypeptide reads, in one-letter code: Fructose-bisphosphate aldolase 2, chloroplastic (398 aa).

The N-terminal 46 residues, 1 to 46 (MASTSLLKASPVLDKSEWVKGQSVLFRQPSSASVVLRNRATSLTVR), are a transit peptide targeting the chloroplast. Arg-95 contributes to the substrate binding site. A Phosphoserine modification is found at Ser-157. Lys-185 is a substrate binding site. The residue at position 215 (Ser-215) is a Phosphoserine. The active-site Proton acceptor is Glu-225. The Schiff-base intermediate with dihydroxyacetone-P role is filled by Lys-267. 309-311 (SGG) contacts substrate. Lys-394 is subject to N6,N6,N6-trimethyllysine.

Belongs to the class I fructose-bisphosphate aldolase family. As to quaternary structure, homotetramer. In terms of processing, can be trimethylated at Lys-394 by LSMT-L. The methylation level has no influence on the ologomerization state or on the kinetic properties of the enzyme. Phosphorylated on tyrosine residues in response to abscisic acid (ABA) in germinating seeds. In terms of tissue distribution, highly expressed in rosettes leaves.

Its subcellular location is the plastid. The protein resides in the chloroplast. It localises to the plastoglobule. It is found in the chloroplast stroma. It catalyses the reaction beta-D-fructose 1,6-bisphosphate = D-glyceraldehyde 3-phosphate + dihydroxyacetone phosphate. Its pathway is carbohydrate degradation; glycolysis; D-glyceraldehyde 3-phosphate and glycerone phosphate from D-glucose: step 4/4. Its function is as follows. Plays a key role in glycolysis and gluconeogenesis. The protein is Fructose-bisphosphate aldolase 2, chloroplastic of Arabidopsis thaliana (Mouse-ear cress).